A 128-amino-acid polypeptide reads, in one-letter code: MSSPEKVEPQRAILESFANPNPQRDYEIDMHCPEFTCLCPKTGQPDFADFRITYVADEKCIELKSLKIYMWSFRDRGAFHEAVTNQIMDDLIAVCDPRYMQVQGAFYVRGGITTTITVEHHKERSTEA.

Cysteine 39 (thioimide intermediate) is an active-site residue. Aspartate 46 functions as the Proton donor in the catalytic mechanism. Substrate contacts are provided by residues 61 to 63 and 80 to 81; these read IEL and HE.

The protein belongs to the GTP cyclohydrolase I family. QueF type 1 subfamily.

Its subcellular location is the cytoplasm. The enzyme catalyses 7-aminomethyl-7-carbaguanine + 2 NADP(+) = 7-cyano-7-deazaguanine + 2 NADPH + 3 H(+). The protein operates within tRNA modification; tRNA-queuosine biosynthesis. In terms of biological role, catalyzes the NADPH-dependent reduction of 7-cyano-7-deazaguanine (preQ0) to 7-aminomethyl-7-deazaguanine (preQ1). This is NADPH-dependent 7-cyano-7-deazaguanine reductase from Magnetococcus marinus (strain ATCC BAA-1437 / JCM 17883 / MC-1).